Reading from the N-terminus, the 391-residue chain is 5-amino-6-(D-ribitylamino)uracil--L-tyrosine 4-hydroxyphenyl transferase (391 aa).

The Radical SAM core domain maps to 55–302 (VTYVINRNIN…GAVARIYLGN (248 aa)). 3 residues coordinate [4Fe-4S] cluster: C69, C73, and C76.

It belongs to the radical SAM superfamily. CofH family. In terms of assembly, consists of two subunits, CofG and CofH. [4Fe-4S] cluster serves as cofactor.

It catalyses the reaction 5-amino-6-(D-ribitylamino)uracil + L-tyrosine + S-adenosyl-L-methionine = 5-amino-5-(4-hydroxybenzyl)-6-(D-ribitylimino)-5,6-dihydrouracil + 2-iminoacetate + 5'-deoxyadenosine + L-methionine + H(+). The protein operates within cofactor biosynthesis; coenzyme F0 biosynthesis. In terms of biological role, catalyzes the radical-mediated synthesis of 5-amino-5-(4-hydroxybenzyl)-6-(D-ribitylimino)-5,6-dihydrouracil from 5-amino-6-(D-ribitylamino)uracil and L-tyrosine. The protein is 5-amino-6-(D-ribitylamino)uracil--L-tyrosine 4-hydroxyphenyl transferase of Trichormus variabilis (strain ATCC 29413 / PCC 7937) (Anabaena variabilis).